Here is a 235-residue protein sequence, read N- to C-terminus: Small ribosomal subunit protein mS23 (235 aa).

Positions 51-71 (PYPIQHTEPKDRGRAAQRPRN) are disordered.

Belongs to the mitochondrion-specific ribosomal protein mS23 family. In terms of assembly, component of the mitochondrial small ribosomal subunit.

The protein localises to the mitochondrion. The sequence is that of Small ribosomal subunit protein mS23 (RSM25) from Chaetomium globosum (strain ATCC 6205 / CBS 148.51 / DSM 1962 / NBRC 6347 / NRRL 1970) (Soil fungus).